Here is a 242-residue protein sequence, read N- to C-terminus: DNA repair protein RecO (242 aa).

This sequence belongs to the RecO family.

Involved in DNA repair and RecF pathway recombination. This is DNA repair protein RecO from Dechloromonas aromatica (strain RCB).